The primary structure comprises 232 residues: Dehydrin DHN3 (232 aa).

Over residues 1–14 the composition is skewed to polar residues; that stretch reads MSQYQNQYGAQTGM. Disordered stretches follow at residues 1–66 and 140–232; these read MSQY…QHRG and EHHG…CTGH. Gly residues predominate over residues 49 to 60; that stretch reads TTGGATGQGHGH. Residues 140-157 are compositionally biased toward basic and acidic residues; the sequence is EHHGDKKGVMDKIKEKIP. Positions 159–168 are enriched in polar residues; that stretch reads TEQSRTNTDG. Basic and acidic residues predominate over residues 198–223; that stretch reads EQQDVHHGDEQHGEKKGIMEKIKEKL.

This sequence belongs to the plant dehydrin family.

The polypeptide is Dehydrin DHN3 (DHN3) (Pisum sativum (Garden pea)).